The chain runs to 440 residues: Peroxisome proliferator-activated receptor delta (440 aa).

Positions 1 to 53 (MEQPQEETPEAREEEKEEVAMGDGAPELNGGPEHTLPSSSCADLSQNSSPSSL) are disordered. The span at 36 to 53 (LPSSSCADLSQNSSPSSL) shows a compositional bias: polar residues. Residues 70–144 (NMECRVCGDK…LGMSHNAIRF (75 aa)) constitute a DNA-binding region (nuclear receptor). NR C4-type zinc fingers lie at residues 73 to 93 (CRVC…CEGC) and 110 to 132 (CDRI…FQKC). Positions 210-438 (FVIHDIETLW…HPLLQEIYKD (229 aa)) constitute an NR LBD domain.

It belongs to the nuclear hormone receptor family. NR1 subfamily. Heterodimer with the retinoid X receptor. Interacts (via domain NR LBD) with CRY1 and CRY2 in a ligand-dependent manner. In terms of processing, 'Lys-48'-linked polyubiquitinated; leading to proteasomal degradation. Deubiquitinated and stabilized by OTUD3. Heart, adrenal and intestine.

Its subcellular location is the nucleus. Its function is as follows. Ligand-activated transcription factor key mediator of energy metabolism in adipose tissues. Receptor that binds peroxisome proliferators such as hypolipidemic drugs and fatty acids. Has a preference for poly-unsaturated fatty acids, such as gamma-linoleic acid and eicosapentanoic acid. Once activated by a ligand, the receptor binds to promoter elements of target genes. Regulates the peroxisomal beta-oxidation pathway of fatty acids. Functions as transcription activator for the acyl-CoA oxidase gene. Decreases expression of NPC1L1 once activated by a ligand. The chain is Peroxisome proliferator-activated receptor delta (Ppard) from Mus musculus (Mouse).